We begin with the raw amino-acid sequence, 73 residues long: Conotoxin Im14.3 (73 aa).

The signal sequence occupies residues 1–17; it reads MGVFRCCLAAALVVVCL. The propeptide occupies 18 to 35; that stretch reads SRMGGTEPLESNHEDERR. The segment at 22–42 is disordered; the sequence is GTEPLESNHEDERRADDTSGD. Over residues 27–38 the composition is skewed to basic and acidic residues; that stretch reads ESNHEDERRADD. One can recognise a ShKT domain in the interval 44 to 73; the sequence is CVDTNEDCVNWASTGQCEANPSYMRENCRK.

Contain 2 disulfide bonds. As to expression, expressed by the venom duct.

The protein localises to the secreted. Its function is as follows. Probable neurotoxin. In Conus imperialis (Imperial cone), this protein is Conotoxin Im14.3.